The primary structure comprises 365 residues: WAT1-related protein At1g01070 (365 aa).

Helical transmembrane passes span 14–34, 46–66, 83–103, 107–127, 139–159, 189–209, 221–241, 255–275, 285–305, and 310–330; these read YSPV…NALV, VIGA…AYVL, FVSG…GLSY, TVSC…ALIF, AGML…FLTF, WLLG…WMLF, YSST…LSLY, FVIT…TVAT, VFAS…DFLI, and LYLG…MFLW. One can recognise an EamA 1 domain in the interval 27 to 157; the sequence is MGSVNALVKK…LICISGALFL (131 aa). Positions 223–329 constitute an EamA 2 domain; it reads STCLMSIFAA…VTITGLYMFL (107 aa). Over residues 340–356 the composition is skewed to polar residues; that stretch reads TALSSGMDNEAQYTTPN. Residues 340–365 form a disordered region; that stretch reads TALSSGMDNEAQYTTPNKDNDSKSPV.

This sequence belongs to the drug/metabolite transporter (DMT) superfamily. Plant drug/metabolite exporter (P-DME) (TC 2.A.7.4) family.

It localises to the membrane. The sequence is that of WAT1-related protein At1g01070 from Arabidopsis thaliana (Mouse-ear cress).